The primary structure comprises 929 residues: Chitin synthase 1 (929 aa).

Gly residues predominate over residues 1 to 12 (MAYRGAGGPGGG). Disordered regions lie at residues 1 to 43 (MAYR…QEDE) and 114 to 156 (MGGH…GGGL). Polar residues-rich tracts occupy residues 21 to 33 (QDLNPHSQYSNVQ) and 140 to 149 (SWVQRQNPNA). Asparagine 560 carries an N-linked (GlcNAc...) asparagine glycan. A run of 5 helical transmembrane segments spans residues 587–607 (FFFHVQLIYNILNVIFTWFSL), 643–663 (LFNAVLKYIYLAFVILQFILA), 678–698 (SFFVFSVIQAYILVLSGYLVV), 730–750 (VILLALIAIYGIYFIASFMYL), and 758–778 (SFPYYMLLMSTYINILMVYAF). An N-linked (GlcNAc...) asparagine glycan is attached at asparagine 801. Transmembrane regions (helical) follow at residues 857-877 (TMLVVLWLFSNCLLAVAITSD) and 897-917 (FLLFSTAFLSLIRFIGFLWFL).

Belongs to the chitin synthase family. Class III subfamily.

It is found in the cell membrane. It carries out the reaction [(1-&gt;4)-N-acetyl-beta-D-glucosaminyl](n) + UDP-N-acetyl-alpha-D-glucosamine = [(1-&gt;4)-N-acetyl-beta-D-glucosaminyl](n+1) + UDP + H(+). Its function is as follows. Polymerizes chitin, a structural polymer of the cell wall and septum, by transferring the sugar moiety of UDP-GlcNAc to the non-reducing end of the growing chitin polymer. CHS1 and CHS3 have compensatory functions in cell wall modifications in responses to stresses. Involved in appressoria formation and required for full virulence. This chain is Chitin synthase 1, found in Pyricularia oryzae (strain 70-15 / ATCC MYA-4617 / FGSC 8958) (Rice blast fungus).